The chain runs to 68 residues: Large ribosomal subunit protein uL29c (68 aa).

The protein belongs to the universal ribosomal protein uL29 family.

The protein resides in the plastid. It localises to the chloroplast. In Pyropia yezoensis (Susabi-nori), this protein is Large ribosomal subunit protein uL29c.